The chain runs to 37 residues: Large ribosomal subunit protein bL36 (37 aa).

The protein belongs to the bacterial ribosomal protein bL36 family.

This Geobacillus kaustophilus (strain HTA426) protein is Large ribosomal subunit protein bL36.